The primary structure comprises 1011 residues: E3 ubiquitin-protein ligase mib1 (1011 aa).

The 69-residue stretch at 6 to 74 folds into the MIB/HERC2 1 domain; the sequence is NNRVMVEGVG…AYDLRIMDSA (69 aa). The ZZ-type zinc finger occupies 80 to 132; that stretch reads HDGTMCDTCRQQPIIGIRWKCAECTNYDLCTVCYHGDKHHLRHRFYRITTPGS. C85, C88, C100, C103, C109, C112, H118, and H122 together coordinate Zn(2+). In terms of domain architecture, MIB/HERC2 2 spans 143-221; that stretch reads SKKITARGIF…MSDLKCVQDA (79 aa). ANK repeat units lie at residues 430 to 460, 463 to 492, 496 to 525, 529 to 558, 562 to 591, 595 to 627, 631 to 661, 665 to 694, and 698 to 729; these read DLNEELVKAAANGDVAKVDDLLKRQDVDVNG, AGHTAMQAASQNGHVDILKLLLKHSVDVEA, DGDRAVHHAAFGDEGTVIEVLQRGGADLNA, RRQTPLHIAVNKGHLQVVKKLLDFSCHPSL, EGDTPLHDAISKKRDDILAVLLEAGADVTI, NGFNALHHAALRGNPSAMRVLLSKLPRPWIVDE, DGYTALHLAALNNHVEVAELLVHQGSANLDI, NQQTALHLAVERQHTQIVRLLVRAEAKLDI, and DGDTPLHEALRHHTLSQLRQLQDMQDVGKVDT. 2 consecutive RING-type zinc fingers follow at residues 820–855 and 867–902; these read CMVCSDLKRDTLFGPCGHIATCSLCSPRVKKCLLCK and CVVCSDKKAAVLFQPCGHMCACENCASLMKKCVQCR. A coiled-coil region spans residues 936 to 963; the sequence is QKDKDNTNVNADVQKLQQQLQDIKEQTM. The segment at 964 to 997 adopts an RING-type 3 zinc-finger fold; the sequence is CPVCLDRLKNMIFMCGHGTCQLCGDRMSECPICR.

The protein resides in the cytoplasm. It localises to the cytoskeleton. Its subcellular location is the microtubule organizing center. The protein localises to the centrosome. It is found in the centriolar satellite. The enzyme catalyses S-ubiquitinyl-[E2 ubiquitin-conjugating enzyme]-L-cysteine + [acceptor protein]-L-lysine = [E2 ubiquitin-conjugating enzyme]-L-cysteine + N(6)-ubiquitinyl-[acceptor protein]-L-lysine.. The protein operates within protein modification; protein ubiquitination. Functionally, E3 ubiquitin-protein ligase that mediates ubiquitination of Delta receptors, which act as ligands of Notch proteins. Positively regulates the Delta-mediated Notch signaling by ubiquitinating the intracellular domain of Delta, leading to endocytosis of Delta receptors. The chain is E3 ubiquitin-protein ligase mib1 (mib1) from Xenopus laevis (African clawed frog).